We begin with the raw amino-acid sequence, 351 residues long: MVLSIRSQIIIGVVSSILLTSTILAIAYILMWFNGHMTLTLTLTTIITSCLTLLICSIFINPLIQKIKQFNIKTKQFANGNYASNDKTFNSPKEIYELNQSFNKMASEITQQMNQIKSEQQEKTELIQNLAHDLKTPLASIISYSEGLRDGIITKDHEIKESYDILIKQANRLSTLFDDMTHIITLNTGKTYPPELIQLDQLLVSILQPYEQRIKHENRTLEVNFCNEIDAFYQYRTPLERILTNLLDNALKFSNVGSRIDINISENEDQDTIDIAISDEGIGIIPELQERIFERTFRVENSRNTKTGGSGLGLYIANELAQQNNAKISVSSDIDVGTTMTVTLHKLDITS.

2 consecutive transmembrane segments (helical) span residues 9 to 29 (IIIG…IAYI) and 40 to 60 (TLTL…SIFI). The HAMP domain maps to 61–114 (NPLIQKIKQFNIKTKQFANGNYASNDKTFNSPKEIYELNQSFNKMASEITQQMN). In terms of domain architecture, Histidine kinase spans 129-348 (NLAHDLKTPL…TMTVTLHKLD (220 aa)). The residue at position 132 (histidine 132) is a Phosphohistidine; by autocatalysis.

Post-translationally, autophosphorylated.

Its subcellular location is the cell membrane. The enzyme catalyses ATP + protein L-histidine = ADP + protein N-phospho-L-histidine.. Member of the two-component regulatory system SaeR/SaeS involved in the regulation of staphylococcal virulence factors in a strain-dependent fashion. Probably functions as a membrane-associated protein kinase that upon sensing the appropriate signal, autophosphorylates and in turn activates the cytosolic response regulator SaeR. This is Histidine protein kinase SaeS (saeS) from Staphylococcus aureus (strain USA300).